The following is a 511-amino-acid chain: Apolipoprotein N-acyltransferase (511 aa).

The next 6 helical transmembrane spans lie at 7–25 (PGWPGHLLALAAGALTPLA), 58–78 (GWWYGFGAFGAGTSWIYVSIH), 90–110 (FLMLGFTAGVAFFFALPAWLW), 125–145 (LAFAALWLALELFRSWFLTGF), 163–183 (VPVGGVWLSSFVIALSAALLV), and 192–212 (GASLLLALVLLLGPWAAGLYL). A CN hydrolase domain is found at 230–470 (IQGNIAQELK…QGILRGEVIP (241 aa)). The active-site Proton acceptor is E269. K330 is a catalytic residue. The active-site Nucleophile is C382. A helical transmembrane segment spans residues 478 to 498 (LQYRVWPLAGLAGVLLLWALL).

It belongs to the CN hydrolase family. Apolipoprotein N-acyltransferase subfamily.

It is found in the cell inner membrane. It catalyses the reaction N-terminal S-1,2-diacyl-sn-glyceryl-L-cysteinyl-[lipoprotein] + a glycerophospholipid = N-acyl-S-1,2-diacyl-sn-glyceryl-L-cysteinyl-[lipoprotein] + a 2-acyl-sn-glycero-3-phospholipid + H(+). Its pathway is protein modification; lipoprotein biosynthesis (N-acyl transfer). Functionally, catalyzes the phospholipid dependent N-acylation of the N-terminal cysteine of apolipoprotein, the last step in lipoprotein maturation. In Pseudomonas paraeruginosa (strain DSM 24068 / PA7) (Pseudomonas aeruginosa (strain PA7)), this protein is Apolipoprotein N-acyltransferase.